We begin with the raw amino-acid sequence, 216 residues long: UPF0301 protein Nham_3550 (216 aa).

A compositionally biased stretch (basic residues) spans 1-10; that stretch reads MSAARKRPGT. Residues 1-25 are disordered; sequence MSAARKRPGTGRRQTDDADTGAPDQ.

Belongs to the UPF0301 (AlgH) family.

This is UPF0301 protein Nham_3550 from Nitrobacter hamburgensis (strain DSM 10229 / NCIMB 13809 / X14).